A 527-amino-acid chain; its full sequence is Zinc finger protein 35 (527 aa).

The interval 9–221 (MALAPWGPVK…NPKTQLGQKP (213 aa)) is globular domain. Residues 16–38 (PVKVKKEEEEEENFPGQASSQQV) are disordered. Glycyl lysine isopeptide (Lys-Gly) (interchain with G-Cter in SUMO2) cross-links involve residues Lys20, Lys21, Lys99, Lys117, Lys125, Lys144, Lys158, Lys189, and Lys214. C2H2-type zinc fingers lie at residues 222–244 (FTCS…QRIH) and 250–272 (FECH…QRIH). A Glycyl lysine isopeptide (Lys-Gly) (interchain with G-Cter in SUMO2) cross-link involves residue Lys276. 9 consecutive C2H2-type zinc fingers follow at residues 278–300 (YVCS…QKIH), 306–328 (FKCN…QKVH), 334–356 (YECN…QRIH), 362–384 (FACN…QRSH), 390–412 (YECK…QRIH), 418–440 (YDCS…QRIH), 446–468 (YVCN…QRIH), 474–496 (YTCN…QRTH), and 502–524 (YECE…HRTH).

This sequence belongs to the krueppel C2H2-type zinc-finger protein family.

The protein resides in the nucleus. In terms of biological role, may be involved in transcriptional regulation. Involved in cell differentiation and/or proliferation. This Homo sapiens (Human) protein is Zinc finger protein 35 (ZNF35).